The sequence spans 236 residues: 2-C-methyl-D-erythritol 4-phosphate cytidylyltransferase (236 aa).

This sequence belongs to the IspD/TarI cytidylyltransferase family. IspD subfamily. As to quaternary structure, homodimer.

The catalysed reaction is 2-C-methyl-D-erythritol 4-phosphate + CTP + H(+) = 4-CDP-2-C-methyl-D-erythritol + diphosphate. Its pathway is isoprenoid biosynthesis; isopentenyl diphosphate biosynthesis via DXP pathway; isopentenyl diphosphate from 1-deoxy-D-xylulose 5-phosphate: step 2/6. In terms of biological role, catalyzes the formation of 4-diphosphocytidyl-2-C-methyl-D-erythritol from CTP and 2-C-methyl-D-erythritol 4-phosphate (MEP). This Salmonella paratyphi A (strain ATCC 9150 / SARB42) protein is 2-C-methyl-D-erythritol 4-phosphate cytidylyltransferase.